The following is a 503-amino-acid chain: MFGELQKPHVLVLGLGESGLAMARWCGLNGCAVRVADTREAPANLVFLQAELMSAEFVGGPFAESLLDGIGLVAISPGLSPLEANTGELLAAARQRGIPVWGEIELFARALAHLQAESGYAPKVLAITGTNGKTTTTALTGRLVERAGKSVAVAGNISPSALDKLSACIASATLPDVWVLELSSFQLETTHTLAPHAATVLNVTQDHLDWHGSMEAYAASKARIFGPAGTACVQVLNRNDRLTMDMARPGTAPVTFGTDLPETPGSFGVLREGGMPWLVLAEPDSEAEGEGKPRRRKADATAQEAVPVRHKRLMPADALHIRGMHNATNAMAALALCRAIDLPLNALLHGLREYRGEPHRVEWVATIDEVEYFDDSKGTNVGATVAALSGLDKRVVLIAGGEGKGQDFSPLAAPVAQYARAVVLIGRAAGELRDALQGSGASLVDAATLEEAVNKAAELAEGGDVVLLSPACASLDMFRNYVHRAEVFRSAVEELALSRGIMP.

129–135 (GTNGKTT) contacts ATP. A disordered region spans residues 284 to 305 (DSEAEGEGKPRRRKADATAQEA).

It belongs to the MurCDEF family.

It localises to the cytoplasm. It catalyses the reaction UDP-N-acetyl-alpha-D-muramoyl-L-alanine + D-glutamate + ATP = UDP-N-acetyl-alpha-D-muramoyl-L-alanyl-D-glutamate + ADP + phosphate + H(+). The protein operates within cell wall biogenesis; peptidoglycan biosynthesis. Functionally, cell wall formation. Catalyzes the addition of glutamate to the nucleotide precursor UDP-N-acetylmuramoyl-L-alanine (UMA). The polypeptide is UDP-N-acetylmuramoylalanine--D-glutamate ligase (Cupriavidus pinatubonensis (strain JMP 134 / LMG 1197) (Cupriavidus necator (strain JMP 134))).